The sequence spans 209 residues: Prolactin (209 aa).

The signal sequence occupies residues 1–24 (MAQRFKGRSLFLTALLCLASQGYA). Cystine bridges form between Cys-70/Cys-184 and Cys-201/Cys-209.

Belongs to the somatotropin/prolactin family.

It is found in the secreted. In Anguilla anguilla (European freshwater eel), this protein is Prolactin (prl).